The following is a 343-amino-acid chain: Thymidine kinase (343 aa).

Position 27–34 (27–34 (GAYGIGKS)) interacts with ATP. Catalysis depends on E56, which acts as the Proton acceptor. Residues Y74 and Q98 each coordinate substrate. R188 lines the ATP pocket. Residue R194 coordinates substrate.

This sequence belongs to the herpesviridae thymidine kinase family. In terms of assembly, homodimer.

The catalysed reaction is thymidine + ATP = dTMP + ADP + H(+). In terms of biological role, catalyzes the transfer of the gamma-phospho group of ATP to thymidine to generate dTMP in the salvage pathway of pyrimidine synthesis. The dTMP serves as a substrate for DNA polymerase during viral DNA replication. Allows the virus to be reactivated and to grow in non-proliferative cells lacking a high concentration of phosphorylated nucleic acid precursors. This Felidae (cat family) protein is Thymidine kinase.